The chain runs to 57 residues: uncharacterized protein (57 aa).

The tract at residues 1-57 (MDDTLPKQMTPTDTSPLKEEQAHCNNKTLENQPKNINDNKCTDSQNTDLQNTEPSKV) is disordered. Over residues 23-57 (HCNNKTLENQPKNINDNKCTDSQNTDLQNTEPSKV) the composition is skewed to polar residues.

This is an uncharacterized protein from Ornithodoros (relapsing fever ticks).